The chain runs to 250 residues: Small ribosomal subunit protein uS3 (250 aa).

Residues 39-111 form the KH type-2 domain; the sequence is IRTLIKNHYP…KVQINIFEVK (73 aa).

This sequence belongs to the universal ribosomal protein uS3 family. In terms of assembly, part of the 30S ribosomal subunit. Forms a tight complex with proteins S10 and S14.

Binds the lower part of the 30S subunit head. Binds mRNA in the 70S ribosome, positioning it for translation. In Phytoplasma vitis (Flavescence doree phytoplasma), this protein is Small ribosomal subunit protein uS3.